The chain runs to 160 residues: UPF0758 protein YfjY (160 aa).

The MPN domain occupies 38–160 (AFTSTQAARD…IYSFAEHGLL (123 aa)). Zn(2+) contacts are provided by histidine 109, histidine 111, and aspartate 122. The JAMM motif motif lies at 109–122 (HNHPSGDTTPSQAD).

This sequence belongs to the UPF0758 family.

This is UPF0758 protein YfjY (yfjY) from Escherichia coli (strain K12).